Reading from the N-terminus, the 723-residue chain is Tryptophan 2-monooxygenase (723 aa).

4 residues coordinate FMN: Ser218, Glu238, Arg246, and Arg266. Position 266 (Arg266) interacts with substrate.

This sequence belongs to the tryptophan 2-monooxygenase family. FMN serves as cofactor.

It carries out the reaction L-tryptophan + O2 = indole-3-acetamide + CO2 + H2O. The protein operates within plant hormone metabolism; auxin biosynthesis. In Allorhizobium ampelinum (strain ATCC BAA-846 / DSM 112012 / S4) (Agrobacterium vitis (strain S4)), this protein is Tryptophan 2-monooxygenase (iaaM).